Here is a 223-residue protein sequence, read N- to C-terminus: DnaJ homolog subfamily B member 9 (223 aa).

An N-terminal signal peptide occupies residues 1–23; sequence MATPQSIFIFAICILMITELILA. One can recognise a J domain in the interval 26–90; sequence SYYDILGVPK…NRRKEYDTLG (65 aa). Residues 91–223 are divergent targeting domain; it reads HSAFTSGKGQ…VTTYTDCSGQ (133 aa). S133 bears the Phosphoserine mark.

In terms of assembly, interacts with HSPA5/BiP; interaction is direct. Interacts with ERN1/IRE1 (via the luminal region). Interacts with DERL1. In terms of tissue distribution, widely expressed. Expressed at highest level in the liver, placenta and kidney.

The protein localises to the endoplasmic reticulum lumen. Its function is as follows. Co-chaperone for Hsp70 protein HSPA5/BiP that acts as a key repressor of the ERN1/IRE1-mediated unfolded protein response (UPR). J domain-containing co-chaperones stimulate the ATPase activity of Hsp70 proteins and are required for efficient substrate recognition by Hsp70 proteins. In the unstressed endoplasmic reticulum, interacts with the luminal region of ERN1/IRE1 and selectively recruits HSPA5/BiP: HSPA5/BiP disrupts the dimerization of the active ERN1/IRE1 luminal region, thereby inactivating ERN1/IRE1. Also involved in endoplasmic reticulum-associated degradation (ERAD) of misfolded proteins. Required for survival of B-cell progenitors and normal antibody production. The chain is DnaJ homolog subfamily B member 9 (DNAJB9) from Homo sapiens (Human).